The following is a 431-amino-acid chain: FAD-dependent monooxygenase nodY1 (431 aa).

A signal peptide spans 1–21 (MASTGVSVIVVGLGLAGLTTA). 2 residues coordinate FAD: E35 and R110. Residue R188 is part of the active site. D313 contributes to the FAD binding site.

It belongs to the paxM FAD-dependent monooxygenase family. It depends on FAD as a cofactor.

The protein operates within secondary metabolite biosynthesis. Its function is as follows. FAD-dependent monooxygenase; part of the gene cluster that mediates the biosynthesis of the indole diterpenes nodulisporic acids (NA). Nodulisporic acid A (NAA) and its chemically modified derivatives are of particular significance because of their highly potent insecticidal activity against blood-feeding arthropods and lack of observable adverse effects on mammals, in particular the tremogenicity associated with the paspaline-derived IDTs is not observed. The geranylgeranyl diphosphate (GGPP) synthase ggs1, localized outside of the cluster, is proposed to catalyze the first step in nodulisporic acid biosynthesis via conversion of farnesyl pyrophosphate and isopentyl pyrophosphate into geranylgeranyl pyrophosphate (GGPP). Condensation of indole-3-glycerol phosphate with GGPP by the prenyl transferase nodC then forms 3-geranylgeranylindole (3-GGI). Epoxidation by the FAD-dependent monooxygenase nodM leads to a single-epoxidized-GGI that is substrate of the terpene cyclase nodB for cyclization to yield emindole SB. The terminal methyl carbon, C28, of emindole SB is then oxidized by the cytochrome P450 monooxygenase nodW to produce nodulisporic acid F (NAF), the pentacyclic core of NAA. NAF is converted to nodulisporic acid E (NAE) via prenylation. This step is probably performed by one of the indole diterpene prenyltransferases nodD1 or nodD2. Several oxidation steps performed by the FAD-linked oxidoreductase nodO and one of the cytochrome P450 monooxygenase nodR, nodX or nodZ further convert NAE to nodulisporic acid D (NAD). NAD is substrate of cytochrome P450 monooxygenase nodJ to produce the precursor of nodulisporic acid C (NAC), converted to NAC by one of the indole diterpene prenyltransferases nodD1 or nodD2. The FAD-dependent monooxygenase nodY2 then oxidizes NAC to nodulisporic acid B (NAB). Finally NAB is converted to NAA by one of the cytochrome P450 monooxygenases nodR, nodX or nodZ. This is FAD-dependent monooxygenase nodY1 from Hypoxylon pulicicidum.